The sequence spans 449 residues: 3-phosphoshikimate 1-carboxyvinyltransferase (449 aa).

A disordered region spans residues 1–30; the sequence is MSHDSSPQPLTAAPGAPLRGRLRPPGDKSI. Residues Lys28, Ser29, and Arg33 each coordinate 3-phosphoshikimate. Residue Lys28 participates in phosphoenolpyruvate binding. 2 residues coordinate phosphoenolpyruvate: Gly101 and Arg129. 3-phosphoshikimate contacts are provided by Ser175, Gln177, Asp330, and Lys357. Gln177 contributes to the phosphoenolpyruvate binding site. Asp330 serves as the catalytic Proton acceptor. The phosphoenolpyruvate site is built by Arg361 and Arg405.

The protein belongs to the EPSP synthase family. Monomer.

It localises to the cytoplasm. It catalyses the reaction 3-phosphoshikimate + phosphoenolpyruvate = 5-O-(1-carboxyvinyl)-3-phosphoshikimate + phosphate. It participates in metabolic intermediate biosynthesis; chorismate biosynthesis; chorismate from D-erythrose 4-phosphate and phosphoenolpyruvate: step 6/7. Functionally, catalyzes the transfer of the enolpyruvyl moiety of phosphoenolpyruvate (PEP) to the 5-hydroxyl of shikimate-3-phosphate (S3P) to produce enolpyruvyl shikimate-3-phosphate and inorganic phosphate. The protein is 3-phosphoshikimate 1-carboxyvinyltransferase of Methylobacterium radiotolerans (strain ATCC 27329 / DSM 1819 / JCM 2831 / NBRC 15690 / NCIMB 10815 / 0-1).